Here is a 171-residue protein sequence, read N- to C-terminus: Large ribosomal subunit protein bL9 (171 aa).

Belongs to the bacterial ribosomal protein bL9 family.

In terms of biological role, binds to the 23S rRNA. The protein is Large ribosomal subunit protein bL9 of Rickettsia rickettsii (strain Iowa).